The primary structure comprises 414 residues: Diaminopimelate decarboxylase (414 aa).

The residue at position 52 (Lys52) is an N6-(pyridoxal phosphate)lysine. Residues Gly231 and 265 to 268 (EPGR) contribute to the pyridoxal 5'-phosphate site. Substrate is bound by residues Arg268, Arg304, and Tyr308. Cys334 functions as the Proton donor in the catalytic mechanism. Positions 335 and 362 each coordinate substrate. Pyridoxal 5'-phosphate is bound at residue Tyr362.

The protein belongs to the Orn/Lys/Arg decarboxylase class-II family. LysA subfamily. In terms of assembly, homodimer. Requires pyridoxal 5'-phosphate as cofactor.

The enzyme catalyses meso-2,6-diaminopimelate + H(+) = L-lysine + CO2. Its pathway is amino-acid biosynthesis; L-lysine biosynthesis via DAP pathway; L-lysine from DL-2,6-diaminopimelate: step 1/1. Its function is as follows. Specifically catalyzes the decarboxylation of meso-diaminopimelate (meso-DAP) to L-lysine. The sequence is that of Diaminopimelate decarboxylase from Neisseria meningitidis serogroup B (strain ATCC BAA-335 / MC58).